A 635-amino-acid chain; its full sequence is MPITPASLSFAEDGTPYSTAYGDVYHSSDGGLGQAHHVFLAGNGLPERWRGRERFVIVETGFGLGLNFLASWAAWRKDPQRSERLHFVSCELHPFRVEDLALLHARWPEFAPLAAELQANWPCLAPGVHRLHLDGGRVCLTLYFGDARDGLAQLDARADAFLLDGFSPAKNPDLWSARIFHLLARLAAADATLATWSVAGEVREGLRRAGFEVEKAPGFGGKRQMLRGRYLGRGHRPAPAAAERRALVIGAGVAGTSIAERLAARGWQVELLDAASGPAQGASGNHAGVLRPLPSLDDNRMGRLTRAGTLYGWRHIQRLQAAGLPLRAEACGVLHLARDAAQEAKMRAVVERLALPPAHLRFVSAAEASEIGGWPVPLGGWWFGDSGWVQPPSLCAANLSAGGEGIRAHWNARVTLARADTRWQARDAQGALLAEAPVAILAAGTGITGFPLAAPLPVVSARGQVSLLPAPAGSAPRVVMCRMGYVSPAVDGLRCAGATFDVGDDDATLRARDHHENLSKLEAMLPGYTAALATQPAEGRVGFRPASPDRLPMVGAVPALTTLAAPCALAEIPRHTGLYALSGFGARGLVWATLAAETLASQLDGEPLPLERDLVDALDPARFLLRPARTLRGED.

Residues 1–231 (MPITPASLSF…KRQMLRGRYL (231 aa)) form a tRNA (mnm(5)s(2)U34)-methyltransferase region. The tract at residues 249–635 (IGAGVAGTSI…RPARTLRGED (387 aa)) is FAD-dependent cmnm(5)s(2)U34 oxidoreductase.

In the N-terminal section; belongs to the methyltransferase superfamily. tRNA (mnm(5)s(2)U34)-methyltransferase family. The protein in the C-terminal section; belongs to the DAO family. The cofactor is FAD.

The protein localises to the cytoplasm. It catalyses the reaction 5-aminomethyl-2-thiouridine(34) in tRNA + S-adenosyl-L-methionine = 5-methylaminomethyl-2-thiouridine(34) in tRNA + S-adenosyl-L-homocysteine + H(+). Catalyzes the last two steps in the biosynthesis of 5-methylaminomethyl-2-thiouridine (mnm(5)s(2)U) at the wobble position (U34) in tRNA. Catalyzes the FAD-dependent demodification of cmnm(5)s(2)U34 to nm(5)s(2)U34, followed by the transfer of a methyl group from S-adenosyl-L-methionine to nm(5)s(2)U34, to form mnm(5)s(2)U34. The sequence is that of tRNA 5-methylaminomethyl-2-thiouridine biosynthesis bifunctional protein MnmC from Azoarcus sp. (strain BH72).